Consider the following 653-residue polypeptide: Protease 1 (653 aa).

The or 27 signal peptide spans 1–20; sequence MKRICGSLLLLGLSISAALA. Residues 21–205 constitute a propeptide that is removed on maturation; that stretch reads APASRPAAFD…RRLAAASGEK (185 aa). 3 cysteine pairs are disulfide-bonded: Cys-211-Cys-421, Cys-217-Cys-285, and Cys-241-Cys-263. Catalysis depends on charge relay system residues His-262, Asp-318, and Ser-399. The PKD domain occupies 474 to 553; that stretch reads NTPPVANFTS…TNTKTGSVTV (80 aa). Residues 474–653 constitute a propeptide, thr/Ser-rich; the sequence is NTPPVANFTS…AAQRAPGSCG (180 aa). The region spanning 555–653 is the P/Homo B domain; the sequence is GGPGAQTYTN…AAQRAPGSCG (99 aa).

It belongs to the peptidase S1 family. In terms of processing, three disulfide bonds are present.

The protein resides in the secreted. The catalysed reaction is Preferential cleavage: Lys-|-Xaa, including Lys-|-Pro.. The sequence is that of Protease 1 from Achromobacter lyticus.